The sequence spans 266 residues: MAAVPELSSEVTAYHSDENELFFEVDGPNKMQYCFQDRDLCSLDEGIKLQISHQHFNKSFRQTVSLIVAVEKLRKKLAPCTWAFQDDDLRPLLPFIFEEEPIVCDTWDEEYESDTPVPSRNCTLHDIQHKRLVLSDPCELKALHLNGDNLNRQVVFSMSFVQGERSDNKMPVALGLKGKNLYLSCVMKDGKPVLQLESVDGKQYPKKKMEKRFVFNKITSKSTVEFESAQFPNWYISTSQAEHKPVFLGNNNGQDIIDFKLELVSS.

Positions 1–114 (MAAVPELSSE…DTWDEEYESD (114 aa)) are excised as a propeptide.

It belongs to the IL-1 family. Monomer. In its precursor form, weakly interacts with full-length MEFV; the mature cytokine does not interact at all. Interacts with integrins ITGAV:ITGBV and ITGA5:ITGB1; integrin-binding is required for IL1B signaling. Interacts with cargo receptor TMED10; the interaction is direct and is required for the secretion of IL1B mature form. Interacts with HSP90AB1; the interaction facilitates cargo translocation into the ERGIC. Interacts with HSP90B1; the interaction facilitates cargo translocation into the ERGIC.

It localises to the cytoplasm. Its subcellular location is the cytosol. The protein localises to the secreted. It is found in the lysosome. The protein resides in the extracellular exosome. Functionally, potent pro-inflammatory cytokine. Initially discovered as the major endogenous pyrogen, induces prostaglandin synthesis, neutrophil influx and activation, T-cell activation and cytokine production, B-cell activation and antibody production, and fibroblast proliferation and collagen production. Promotes Th17 differentiation of T-cells. Synergizes with IL12/interleukin-12 to induce IFNG synthesis from T-helper 1 (Th1) cells. Plays a role in angiogenesis by inducing VEGF production synergistically with TNF and IL6. Involved in transduction of inflammation downstream of pyroptosis: its mature form is specifically released in the extracellular milieu by passing through the gasdermin-D (GSDMD) pore. This Cavia porcellus (Guinea pig) protein is Interleukin-1 beta (IL1B).